Consider the following 298-residue polypeptide: Small ribosomal subunit protein uS2 (298 aa).

Basic and acidic residues-rich tracts occupy residues 237–259 (QSKELDDKADEKAAKVSHSDGQK) and 280–298 (PKSEKQDNVDAAKLPENKG). The segment at 237–298 (QSKELDDKAD…DAAKLPENKG (62 aa)) is disordered.

Belongs to the universal ribosomal protein uS2 family.

The polypeptide is Small ribosomal subunit protein uS2 (Neorickettsia sennetsu (strain ATCC VR-367 / Miyayama) (Ehrlichia sennetsu)).